Here is a 120-residue protein sequence, read N- to C-terminus: Large ribosomal subunit protein bL36m (120 aa).

The protein belongs to the bacterial ribosomal protein bL36 family. In terms of assembly, component of the mitochondrial ribosome large subunit (39S) which comprises a 16S rRNA and about 50 distinct proteins.

It localises to the mitochondrion. The protein is Large ribosomal subunit protein bL36m (mrpl36) of Osmerus mordax (Rainbow smelt).